The chain runs to 98 residues: NADH-ubiquinone oxidoreductase chain 4L (98 aa).

3 helical membrane passes run 1-21 (MTHI…GLTF), 26-46 (LLSA…ALAM), and 59-79 (APLL…SLLV).

Belongs to the complex I subunit 4L family.

Its subcellular location is the mitochondrion membrane. It catalyses the reaction a ubiquinone + NADH + 5 H(+)(in) = a ubiquinol + NAD(+) + 4 H(+)(out). Its function is as follows. Core subunit of the mitochondrial membrane respiratory chain NADH dehydrogenase (Complex I) which catalyzes electron transfer from NADH through the respiratory chain, using ubiquinone as an electron acceptor. Part of the enzyme membrane arm which is embedded in the lipid bilayer and involved in proton translocation. The chain is NADH-ubiquinone oxidoreductase chain 4L (MT-ND4L) from Polypterus ornatipinnis (Ornate bichir).